Here is a 258-residue protein sequence, read N- to C-terminus: 5'-nucleotidase SurE (258 aa).

Residues D16, D17, S47, and N99 each coordinate a divalent metal cation.

This sequence belongs to the SurE nucleotidase family. Requires a divalent metal cation as cofactor.

Its subcellular location is the cytoplasm. It carries out the reaction a ribonucleoside 5'-phosphate + H2O = a ribonucleoside + phosphate. In terms of biological role, nucleotidase that shows phosphatase activity on nucleoside 5'-monophosphates. The chain is 5'-nucleotidase SurE from Coxiella burnetii (strain CbuK_Q154) (Coxiella burnetii (strain Q154)).